We begin with the raw amino-acid sequence, 411 residues long: MAQINENYLKLPGSYLFSEIARRVNEFKVQNPDADIIRLGIGDVTRPLAPVVVEAMKQAVEEMGRAETFRGYGPEQGYDFLIEKIIANDYAPRGVQLGMDEVFVSDGAKSDTANFQEIFGVDNIMAVTDPVYPVYVDSNVMAGRTGNYDTEKGQYGRIIYLPCTEEGDMKPELPTAPVDMIYLCFPNNPTGMTLTKEELKVWVDYARENKAIILFDSAYEAFIREEGVPRSIYEVEGAREVAVEFRSFSKTAGFTGTRCAYTVVPKDIMIYDSTGEGHSLNKLWLRRQTTKFNGVSYPVQAGAAAVYTEEGKKQIQATIDYYMENARIIREGLQEAGFKVFGGVNAPYIWMKTPGTMGSWEFFDKLMTEAHVVGTPGAGFGANGEGFFRLTAFGTRENTEKAIERIKARMK.

Substrate contacts are provided by Tyr-15 and Gly-42. Residues Tyr-72, 108–109, Tyr-132, Asn-188, Tyr-219, and 247–249 each bind pyridoxal 5'-phosphate; these read AK and SFS. The substrate site is built by Lys-109, Tyr-132, and Asn-188. Lys-250 carries the post-translational modification N6-(pyridoxal phosphate)lysine. 2 residues coordinate pyridoxal 5'-phosphate: Arg-258 and Asn-293. The substrate site is built by Asn-293 and Arg-389.

The protein belongs to the class-I pyridoxal-phosphate-dependent aminotransferase family. LL-diaminopimelate aminotransferase subfamily. In terms of assembly, homodimer. Requires pyridoxal 5'-phosphate as cofactor.

It carries out the reaction (2S,6S)-2,6-diaminopimelate + 2-oxoglutarate = (S)-2,3,4,5-tetrahydrodipicolinate + L-glutamate + H2O + H(+). The protein operates within amino-acid biosynthesis; L-lysine biosynthesis via DAP pathway; LL-2,6-diaminopimelate from (S)-tetrahydrodipicolinate (aminotransferase route): step 1/1. Functionally, involved in the synthesis of meso-diaminopimelate (m-DAP or DL-DAP), required for both lysine and peptidoglycan biosynthesis. Catalyzes the direct conversion of tetrahydrodipicolinate to LL-diaminopimelate. Is also able to catalyze the reverse reaction in vitro, i.e. the transamination of LL-diaminopimelate with 2-oxoglutarate to produce tetrahydrodipicolinate and glutamate. Can also use m-DAP instead of LL-DAP as the amino-group donor, and oxaloacetate or pyruvate as the amino-group acceptor. In Desulfitobacterium hafniense (strain DSM 10664 / DCB-2), this protein is LL-diaminopimelate aminotransferase.